We begin with the raw amino-acid sequence, 143 residues long: Hemoglobin subunit alpha (143 aa).

In terms of domain architecture, Globin spans 3 to 143; sequence KLSGEDKANV…TMRLCISKYR (141 aa). Residue His-60 participates in O2 binding. A heme b-binding site is contributed by His-89.

Belongs to the globin family. As to quaternary structure, heterotetramer of two alpha chains and two beta chains. Red blood cells.

In terms of biological role, involved in oxygen transport from the lung to the various peripheral tissues. This Ambystoma mexicanum (Axolotl) protein is Hemoglobin subunit alpha (HBA).